The primary structure comprises 106 residues: UPF0060 membrane protein Csal_2746 (106 aa).

4 helical membrane-spanning segments follow: residues 6–26, 31–51, 59–79, and 85–105; these read LLFIATAMAEIIGCYLPWLWL, SPWLLVPAAASLTLFVWLLSL, VYAAYGGVYVVCALVWLWGVD, and PTDWIGAALALTGMGVIASGW.

It belongs to the UPF0060 family.

It is found in the cell inner membrane. This Chromohalobacter salexigens (strain ATCC BAA-138 / DSM 3043 / CIP 106854 / NCIMB 13768 / 1H11) protein is UPF0060 membrane protein Csal_2746.